We begin with the raw amino-acid sequence, 181 residues long: Large ribosomal subunit protein uL6 (181 aa).

The protein belongs to the universal ribosomal protein uL6 family. Part of the 50S ribosomal subunit.

In terms of biological role, this protein binds to the 23S rRNA, and is important in its secondary structure. It is located near the subunit interface in the base of the L7/L12 stalk, and near the tRNA binding site of the peptidyltransferase center. The protein is Large ribosomal subunit protein uL6 of Flavobacterium psychrophilum (strain ATCC 49511 / DSM 21280 / CIP 103535 / JIP02/86).